We begin with the raw amino-acid sequence, 56 residues long: Large ribosomal subunit protein bL33 (56 aa).

This sequence belongs to the bacterial ribosomal protein bL33 family.

The sequence is that of Large ribosomal subunit protein bL33 from Anaplasma phagocytophilum (strain HZ).